An 875-amino-acid polypeptide reads, in one-letter code: Serrate RNA effector molecule homolog (875 aa).

Residues 1 to 90 (MGDSDDEYDR…RRDWDEHSSD (90 aa)) form a disordered region. N-acetylglycine is present on Gly-2. Ser-4 is subject to Phosphoserine. The residue at position 8 (Tyr-8) is a Phosphotyrosine. The segment covering 8 to 73 (YDRRRRDKFR…ERFSPPRHEL (66 aa)) has biased composition (basic and acidic residues). A phosphoserine mark is found at Ser-67, Ser-74, and Ser-136. Residue Lys-150 forms a Glycyl lysine isopeptide (Lys-Gly) (interchain with G-Cter in SUMO2) linkage. The interval 272–411 (EEEEQAGKTG…KPKDAAGLEC (140 aa)) is disordered. Residues 297-345 (EGERKANDKDEKKEDGKQAENDSSNDDKTKKSEGDGDKEEKKEEAEKEA) are compositionally biased toward basic and acidic residues. A compositionally biased stretch (acidic residues) spans 369-386 (SESESEGGQAEEEKEEAE). A compositionally biased stretch (basic and acidic residues) spans 387-411 (EALKEKEKPKEEEKEKPKDAAGLEC). 2 positions are modified to phosphoserine: Ser-492 and Ser-539. The residue at position 543 (Thr-543) is a Phosphothreonine. A Phosphoserine modification is found at Ser-569. The disordered stretch occupies residues 571–597 (EEEELLGSSGGPPPEEPPKEGNPAEIN). At Thr-670 the chain carries Phosphothreonine. Ser-678 bears the Phosphoserine mark. Omega-N-methylarginine occurs at positions 832, 839, and 849. Residues 834–853 (NYDAFRGQGGYPGKPRNRMV) are disordered.

This sequence belongs to the ARS2 family. In terms of assembly, interacts with CASP8AP2 and ERBB4. Interacts with NCBP1/CBP80 and DROSHA. Interacts with LUZP4. Interacts with NCBP2/CBP20 and NCBP3. Interacts with MTREX. As to expression, widely expressed, with a preference for proliferating cells. Highly expressed in hematopoietic tissues and reduced or absent expression in parenchymal organs like liver and kidney. In the brain, expressed in the subventricular zone by niche astrocytes, ependymal cells and neural stem cells. In this cerebral context, expressed in slowly dividing cells.

The protein resides in the nucleus. Its subcellular location is the nucleoplasm. The protein localises to the cytoplasm. Acts as a mediator between the cap-binding complex (CBC) and the primary microRNAs (miRNAs) processing machinery during cell proliferation. Contributes to the stability and delivery of capped primary miRNA transcripts to the primary miRNA processing complex containing DGCR8 and DROSHA, thereby playing a role in RNA-mediated gene silencing (RNAi) by miRNAs. Binds capped RNAs (m7GpppG-capped RNA); however interaction is probably mediated via its interaction with NCBP1/CBP80 component of the CBC complex. Involved in cell cycle progression at S phase. Does not directly confer arsenite resistance but rather modulates arsenic sensitivity. Independently of its activity on miRNAs, necessary and sufficient to promote neural stem cell self-renewal. Does so by directly binding SOX2 promoter and positively regulating its transcription. The chain is Serrate RNA effector molecule homolog (Srrt) from Mus musculus (Mouse).